We begin with the raw amino-acid sequence, 812 residues long: E3 UFM1-protein ligase 1 homolog (812 aa).

Positions 389 to 495 (IKHSAGQGKP…KTKEDNTNIF (107 aa)) are disordered. 2 stretches are compositionally biased toward basic and acidic residues: residues 403–415 (SEHRIGSDGKDLG) and 475–491 (DAKHGGKKASEKTKEDN).

It belongs to the UFL1 family.

Functionally, E3 UFM1-protein ligase that mediates ufmylation of target proteins. The polypeptide is E3 UFM1-protein ligase 1 homolog (Oryza sativa subsp. indica (Rice)).